Consider the following 363-residue polypeptide: Protein-glutamate methylesterase/protein-glutamine glutaminase 2 (363 aa).

The Response regulatory domain occupies 7-124 (RVLVVDDSAL…SLTLENVADE (118 aa)). Residue Asp58 is modified to 4-aspartylphosphate. Residues 160 to 357 (PVASRTTPSK…NLLMVQSAAQ (198 aa)) form the CheB-type methylesterase domain. Residues Ser176, His203, and Asp299 contribute to the active site.

The protein belongs to the CheB family. Post-translationally, phosphorylated by CheA. Phosphorylation of the N-terminal regulatory domain activates the methylesterase activity.

The protein localises to the cytoplasm. It catalyses the reaction [protein]-L-glutamate 5-O-methyl ester + H2O = L-glutamyl-[protein] + methanol + H(+). The catalysed reaction is L-glutaminyl-[protein] + H2O = L-glutamyl-[protein] + NH4(+). Involved in chemotaxis. Part of a chemotaxis signal transduction system that modulates chemotaxis in response to various stimuli. Catalyzes the demethylation of specific methylglutamate residues introduced into the chemoreceptors (methyl-accepting chemotaxis proteins or MCP) by CheR. Also mediates the irreversible deamidation of specific glutamine residues to glutamic acid. This chain is Protein-glutamate methylesterase/protein-glutamine glutaminase 2, found in Koribacter versatilis (strain Ellin345).